Here is a 592-residue protein sequence, read N- to C-terminus: Protein alan shepard (592 aa).

The segment at 1 to 68 (MGGPHHQHQQ…ASVAAAPPTP (68 aa)) is disordered. Gly residues predominate over residues 18–28 (VGGGNGHGGGA). The segment covering 36 to 54 (PNSQQLPPQMPRSQNYANG) has biased composition (polar residues). Low complexity predominate over residues 55-64 (SSSAASVAAA). Residues tyrosine 124 and tyrosine 140 each carry the phosphotyrosine modification. Residues 162-224 (PATTTYGQRV…AQNQNQQGGE (63 aa)) form a disordered region. Low complexity predominate over residues 176 to 224 (SPSNTNSSSSSNTGSQSGTLSTSLSNTTNTNTTMGPNGTAQNQNQQGGE). 2 consecutive RRM domains span residues 229–307 (TNLY…IWVL) and 319–398 (TNLY…FADG). A disordered region spans residues 565–592 (PMTDSEQASTAASPDEAYTQYPHQAAPK).

Has a role in the perception of gravity. The protein is Protein alan shepard of Drosophila mojavensis (Fruit fly).